The primary structure comprises 199 residues: Octanoyltransferase (199 aa).

One can recognise a BPL/LPL catalytic domain in the interval 27-199 (SNSCDELWLL…FVQYFLTQFK (173 aa)). Residues 66-73 (RGGQVTYH), 133-135 (SIG), and 146-148 (GIA) each bind substrate. Cysteine 164 functions as the Acyl-thioester intermediate in the catalytic mechanism.

This sequence belongs to the LipB family.

The protein localises to the cytoplasm. It catalyses the reaction octanoyl-[ACP] + L-lysyl-[protein] = N(6)-octanoyl-L-lysyl-[protein] + holo-[ACP] + H(+). The protein operates within protein modification; protein lipoylation via endogenous pathway; protein N(6)-(lipoyl)lysine from octanoyl-[acyl-carrier-protein]: step 1/2. Catalyzes the transfer of endogenously produced octanoic acid from octanoyl-acyl-carrier-protein onto the lipoyl domains of lipoate-dependent enzymes. Lipoyl-ACP can also act as a substrate although octanoyl-ACP is likely to be the physiological substrate. This Legionella pneumophila (strain Paris) protein is Octanoyltransferase.